We begin with the raw amino-acid sequence, 97 residues long: CRISPR-associated endoribonuclease Cas2 1 (97 aa).

Asp-12 is a Mg(2+) binding site.

Belongs to the CRISPR-associated endoribonuclease Cas2 protein family. In terms of assembly, homodimer, forms a heterotetramer with a Cas1 homodimer. The cofactor is Mg(2+).

CRISPR (clustered regularly interspaced short palindromic repeat) is an adaptive immune system that provides protection against mobile genetic elements (viruses, transposable elements and conjugative plasmids). CRISPR clusters contain sequences complementary to antecedent mobile elements and target invading nucleic acids. CRISPR clusters are transcribed and processed into CRISPR RNA (crRNA). Functions as a ssRNA-specific endoribonuclease. Involved in the integration of spacer DNA into the CRISPR cassette. The polypeptide is CRISPR-associated endoribonuclease Cas2 1 (Francisella tularensis subsp. novicida (strain U112)).